A 256-amino-acid polypeptide reads, in one-letter code: MLAKRIIPCLDVDNGRVVKGVNFVEIRDAGDPVEIARRYDAEGADEITFLDITASHDERETMVHVVEQVATEVFIPLTVGGGIRRMEDIRRLLNAGADKVSINTAAVFNPDFVREAADKVGSQCIVVAIDAKRVSGPGEADRWEIFTHGGRKPTGLDAVDWARRMVECGAGEILLTSMDRDGTKSGFDIELTRAVSDAVRVPVIASGGVGTLQHLVDGVTRGHADAVLAASIFHFGQHTVGEAKQFMAEQGVEVRL.

Active-site residues include Asp-11 and Asp-130.

The protein belongs to the HisA/HisF family. As to quaternary structure, heterodimer of HisH and HisF.

The protein localises to the cytoplasm. It catalyses the reaction 5-[(5-phospho-1-deoxy-D-ribulos-1-ylimino)methylamino]-1-(5-phospho-beta-D-ribosyl)imidazole-4-carboxamide + L-glutamine = D-erythro-1-(imidazol-4-yl)glycerol 3-phosphate + 5-amino-1-(5-phospho-beta-D-ribosyl)imidazole-4-carboxamide + L-glutamate + H(+). The protein operates within amino-acid biosynthesis; L-histidine biosynthesis; L-histidine from 5-phospho-alpha-D-ribose 1-diphosphate: step 5/9. Its function is as follows. IGPS catalyzes the conversion of PRFAR and glutamine to IGP, AICAR and glutamate. The HisF subunit catalyzes the cyclization activity that produces IGP and AICAR from PRFAR using the ammonia provided by the HisH subunit. The chain is Imidazole glycerol phosphate synthase subunit HisF from Thioalkalivibrio sulfidiphilus (strain HL-EbGR7).